Reading from the N-terminus, the 490-residue chain is Betaine aldehyde dehydrogenase (490 aa).

Asn-93 contacts K(+). Position 150–152 (150–152 (GAW)) interacts with NAD(+). The Charge relay system role is filled by Lys-162. 176–179 (KPSE) is a binding site for NAD(+). Val-180 is a binding site for K(+). 230–233 (GTAT) lines the NAD(+) pocket. Leu-246 contacts K(+). Glu-252 functions as the Proton acceptor in the catalytic mechanism. 3 residues coordinate NAD(+): Gly-254, Cys-286, and Glu-387. Cys-286 serves as the catalytic Nucleophile. Cys-286 bears the Cysteine sulfenic acid (-SOH) mark. K(+) is bound by residues Lys-457 and Gly-460. Glu-464 functions as the Charge relay system in the catalytic mechanism.

This sequence belongs to the aldehyde dehydrogenase family. As to quaternary structure, dimer of dimers. K(+) is required as a cofactor.

It catalyses the reaction betaine aldehyde + NAD(+) + H2O = glycine betaine + NADH + 2 H(+). It functions in the pathway amine and polyamine biosynthesis; betaine biosynthesis via choline pathway; betaine from betaine aldehyde: step 1/1. In terms of biological role, involved in the biosynthesis of the osmoprotectant glycine betaine. Catalyzes the irreversible oxidation of betaine aldehyde to the corresponding acid. This is Betaine aldehyde dehydrogenase from Xanthomonas campestris pv. campestris (strain ATCC 33913 / DSM 3586 / NCPPB 528 / LMG 568 / P 25).